Consider the following 500-residue polypeptide: MTEQVQDENKLIAERRAKLEHIRENCPANGHPNTFDRKHKAADIQAEFGNNTKEELEGMGIVRSIAGRVMAKRGPFLVIQDVSGRIQAYAGKDVQKDLKAKFQGLDIGDIIGVTGQLHLSGKGDLYVNMEEYELLTKALRPLPEKFHGLTDQETRYRQRYIDLIVNEESREAFIMRSKVVSAIRNFMVKKEFMEVETPMMHTIPGGASARPFETHHNALDIAMYLRIAPELYLKRLVVGGFERVFEINRNFRNEGLSPRHNPEFTMMEFYMAYSDYKDLMDLTEEMLSSIATELCGSPKLPYGEHVVDFGGPYARLSMLDAIKKYNPDNATIQSMTYEEVKDVEFMRNLAKSLGMTIEKFWTCGQLLEEIFGETAETQLMQPTFITGYPADISPLARRNDDNHFITDRFEFFIGGREVANGFSELNDAEDQDNRFKAQVDAKDAGDDEAMFYDADYITALEHGLPPTAGQGIGIDRLVMLFTNTHTIRDVILFPAMRPQG.

Residues Glu-410 and Glu-417 each contribute to the Mg(2+) site.

This sequence belongs to the class-II aminoacyl-tRNA synthetase family. Homodimer. The cofactor is Mg(2+).

The protein resides in the cytoplasm. The catalysed reaction is tRNA(Lys) + L-lysine + ATP = L-lysyl-tRNA(Lys) + AMP + diphosphate. This Shewanella sediminis (strain HAW-EB3) protein is Lysine--tRNA ligase.